We begin with the raw amino-acid sequence, 582 residues long: uncharacterized protein (582 aa).

A helical membrane pass occupies residues 20–40 (GFWALGLFGAAINAFSAVLIV).

The protein resides in the membrane. This is an uncharacterized protein from Mycoplasma pneumoniae (strain ATCC 29342 / M129 / Subtype 1) (Mycoplasmoides pneumoniae).